The primary structure comprises 255 residues: ATP synthase subunit a (255 aa).

Residues 1 to 6 constitute a propeptide, removed in mature form; sequence MNFIIN. A run of 5 helical transmembrane segments spans residues 32–52, 91–111, 121–141, 159–200, and 219–251; these read LTSF…FSIL, LFPF…VSLV, LIWT…TGLA, PLVP…LAGL, and LSIL…IKDA.

In terms of assembly, F-type ATP synthases have 2 components, the catalytic core F(1) and the membrane-embedded component F(0), linked together by a central stalk and a peripheral stalk. The central stalk, also called rotor shaft, is often seen as part of F(1). The peripheral stalk is seen as part of F(0). F(0) contains the membrane channel next to the rotor. F-type ATP synthases form dimers but each monomer functions independently in ATP generation. The dimer consists of 17 different polypeptides: ATP1 (subunit alpha, 3 molecules per monomer, part of F(1)), ATP2 (subunit beta, 3 copies per monomer, part of F(1)), ATP3 (subunit gamma, part of the central stalk), ATP4 (subunit b, part of the peripheral stalk), ATP5/OSCP (subunit 5/OSCP, part of the peripheral stalk), ATP6 (subunit a, part of the peripheral stalk), ATP7 (subunit d, part of the peripheral stalk), ATP8 (subunit 8, part of the peripheral stalk), OLI1 (subunit c, part of the rotor, 10 molecules per monomer), ATP14 (subunit h, part of the peripheral stalk), ATP15 (subunit epsilon, part of the central stalk), ATP16 (subunit delta, part of the central stalk), ATP17 (subunit f, part of the peripheral stalk), ATP18 (subunit i/j, part of the peripheral stalk), ATP19 (subunit k, dimer-specific, at interface between monomers), ATP20 (subunit g, at interface between monomers), TIM11 (subunit e, at interface between monomers).

The protein localises to the mitochondrion inner membrane. Functionally, mitochondrial membrane ATP synthase (F(1)F(0) ATP synthase or Complex V) produces ATP from ADP in the presence of a proton gradient across the membrane which is generated by electron transport complexes of the respiratory chain. F-type ATP synthases consist of two structural domains, F(1) - containing the extramembraneous catalytic core, and F(0) - containing the membrane proton channel, linked together by a central stalk and a peripheral stalk. During catalysis, ATP synthesis in the catalytic domain of F(1) is coupled via a rotary mechanism of the central stalk subunits to proton translocation. Key component of the proton channel; it may play a direct role in the translocation of protons across the membrane. The sequence is that of ATP synthase subunit a from Yarrowia lipolytica (strain CLIB 122 / E 150) (Yeast).